The chain runs to 1072 residues: DNA-directed RNA polymerase subunit beta (1072 aa).

The protein belongs to the RNA polymerase beta chain family. As to quaternary structure, in plastids the minimal PEP RNA polymerase catalytic core is composed of four subunits: alpha, beta, beta', and beta''. When a (nuclear-encoded) sigma factor is associated with the core the holoenzyme is formed, which can initiate transcription.

The protein localises to the plastid. The protein resides in the chloroplast. It catalyses the reaction RNA(n) + a ribonucleoside 5'-triphosphate = RNA(n+1) + diphosphate. Its function is as follows. DNA-dependent RNA polymerase catalyzes the transcription of DNA into RNA using the four ribonucleoside triphosphates as substrates. The sequence is that of DNA-directed RNA polymerase subunit beta from Arabis hirsuta (Hairy rock-cress).